We begin with the raw amino-acid sequence, 341 residues long: Aspartate--ammonia ligase (341 aa).

Belongs to the class-II aminoacyl-tRNA synthetase family. AsnA subfamily.

Its subcellular location is the cytoplasm. The enzyme catalyses L-aspartate + NH4(+) + ATP = L-asparagine + AMP + diphosphate + H(+). Its pathway is amino-acid biosynthesis; L-asparagine biosynthesis; L-asparagine from L-aspartate (ammonia route): step 1/1. The protein is Aspartate--ammonia ligase of Clostridium tetani (strain Massachusetts / E88).